A 592-amino-acid chain; its full sequence is ATP-binding protein Uup (592 aa).

ABC transporter domains lie at 1–221 and 289–516; these read MPLI…RIEK and FKLK…KSNI. ATP contacts are provided by residues 36–43 and 321–328; these read GKNGAGKS and GNNGSGKS. Residues 516–550 adopt a coiled-coil conformation; the sequence is ISFLKTKQNQVKKELKKVLNEIEKIENSIKTLKIQ. Residues 518–592 are C-terminal domain (CTD), binds DNA; sequence FLKTKQNQVK…IYWENLEKKL (75 aa).

The protein belongs to the ABC transporter superfamily. ABCF family. Uup subfamily.

It is found in the cytoplasm. It catalyses the reaction ATP + H2O = ADP + phosphate + H(+). Probably plays a role in ribosome assembly or function. May be involved in resolution of branched DNA intermediates that result from template switching in postreplication gaps. Binds DNA and has ATPase activity. In Buchnera aphidicola subsp. Schizaphis graminum (strain Sg), this protein is ATP-binding protein Uup.